Reading from the N-terminus, the 127-residue chain is uncharacterized protein (127 aa).

Transmembrane regions (helical) follow at residues 42–62 (LLIS…IAFI) and 78–98 (GLPI…YYFL).

It is found in the membrane. This is an uncharacterized protein from Schizosaccharomyces pombe (strain 972 / ATCC 24843) (Fission yeast).